We begin with the raw amino-acid sequence, 712 residues long: Voltage-gated chloride channel TMC4 (712 aa).

The disordered stretch occupies residues 1–39; it reads MEENPTLESEAWGSSRGWLAPREARGAPCSSPGPSLSSV. Over 1-168 the chain is Extracellular; the sequence is MEENPTLESE…GTESYFSLLR (168 aa). Asn107 carries an N-linked (GlcNAc...) asparagine glycan. Residues 169-189 form a helical membrane-spanning segment; it reads FLLLLNVLASVLMACMTLLPT. Over 190–249 the chain is Cytoplasmic; sequence WLGGAPPGPPGPDISSPCGSYNPHSQGLVTFATQLFNLLSGEGYLEWSPLFYGFYPPRPR. The helical transmembrane segment at 250–270 threads the bilayer; sequence LAVTYLCWAFAVGLICLLLIL. The Extracellular segment spans residues 271–348; that stretch reads HRSVSGLKQT…GQQARVWLVR (78 aa). Residues 349-369 form a helical membrane-spanning segment; that stretch reads VLLNLLVVALLGAAFYGVYWA. Residues 370-394 lie on the Cytoplasmic side of the membrane; the sequence is TGCTVELQEMPLVQELPLLKLGVNY. A helical membrane pass occupies residues 395 to 415; sequence LPSIFIAGVNFVLPPVFKLIA. Topologically, residues 416–425 are extracellular; it reads PLEGYTRSRQ. Residues 426 to 446 traverse the membrane as a helical segment; it reads IVFILLRTVFLRLASLVVLLF. Residues 447-483 lie on the Cytoplasmic side of the membrane; the sequence is SLWNQITCGGDSEAEDCKTCGYNYKQLPCWETVLGQE. Residues 484–504 form a helical membrane-spanning segment; the sequence is MYKLLLFDLLTVLAVALLIQF. Over 505–542 the chain is Extracellular; the sequence is PRKLLCGLCPGALGRLAGTQEFQVPDEVLGLIYAQTVV. The helical transmembrane segment at 543 to 565 threads the bilayer; it reads WVGSFFCPLLPLLNTVKFLLLFY. Residues 566-592 lie on the Cytoplasmic side of the membrane; it reads LKKLTLFSTCSPAARTFRASAANFFFP. Residues 593–613 traverse the membrane as a helical segment; sequence LVLLLGLAISSVPLLYSIFLI. Over 614–654 the chain is Extracellular; the sequence is PPSKLCGPFRGQSSIWAQIPESISSLPETTQNFLFFLGTQA. The chain crosses the membrane as a helical span at residues 655 to 677; the sequence is FAVPLLLISSILMAYTVALANSY. Residues 678–712 lie on the Cytoplasmic side of the membrane; sequence GRLISELKRQRQTEAQNKVFLARRAVALTSTKPAL.

Belongs to the TMC family.

Its subcellular location is the membrane. It carries out the reaction chloride(in) = chloride(out). In terms of biological role, voltage-gated chloride channel involved in high-concentration salt taste sensation. Depolarization induced by high NaCl concentration may trigger the activation of TMC4-mediated chloride influx into taste bud cells, helping the return to resting potential. Also allows permeation of organic anions including gluconate, but their current amplitudes at positive potentials are less than that of chloride. Involved in pH and temperature-dependent modulation of salty taste. This Homo sapiens (Human) protein is Voltage-gated chloride channel TMC4.